We begin with the raw amino-acid sequence, 873 residues long: MFWKFDLHSSSHIDTLLEREDVTLKELMDEEDVLQECKAQNRKLIEFLLKSECLEDLVSFIIEEPPQDMDEKIRYKYPNISCELLTSDVSQINDRLGEEESLLMKLYSFLLNESPLNPLLASFFSKVLSILISRKPEQIVDFLKKKHDFVDLVIKHIGTSAIMDLLLRLLTCIEPPQPRQEVLNWLNEERIIQRLVEIVHPSQDEDRHSNASQSLCEIIRLSRDQMLQVQNSSEPDPLLASLEKREIIEQLLSNIFHKEKNESAIVSAIQILLTLLETRRQTFEGHIEICPPGMSNSTYSVNKSVLEAIKARLSSFHELLLEPPKKSVMKTTWGVLDPPVGNTRLNVIRLISSLLQTNTSSVNQELIELNSIGVILDMFFKYTWNNFLHTQVEICIALILASPLESTENGTITDQDSTGDNLLLKHLFLKCQLIERILEAWEMNEKKQAEGGRRHGYMGHLTRIANCIVHSTDKGPNSTLVQQLIKELPEEVRERWETFCTSSLGETNKRNTVDLVTTCHIHSSSDDEIDFKETGFSQDSSLQQAFSDYQMQQMTSNFIDQFGFNDEKFADQDDIGNVSFDRVSDINFTLNTNESGNIALFEACCKERIQQFDDGGSDEEDIWEEKHIAFTPESQRRSSSGSTDSEESTDSEEEDGTKQDLFESHANTEDKMEVDLNEPPNWSANFDVPMETAHGTNLDSVGSDVWSTEEPMPAKETGWASFSEFTSSLSSTDSLRSNSPVEMETNTEPMDPLSANATGLATQLETPGSVAMEASSDGEEDAENADKVTETVMNGSMKETLSLTVDAKTETAVFKSEEGKLSTSQDASCKYVVEENAEVAEEAPSALQPANSSPEQRTDQRTLLGETSVNGPV.

Disordered regions lie at residues 628–659 (IAFT…GTKQ), 693–715 (AHGT…MPAK), 729–755 (LSST…PLSA), 767–787 (PGSV…NADK), and 840–873 (AEEA…NGPV). Residues 644-655 (DSEESTDSEEED) are compositionally biased toward acidic residues. A compositionally biased stretch (low complexity) spans 729–739 (LSSTDSLRSNS).

The protein belongs to the SAPS family. As to quaternary structure, protein phosphatase 6 (PP6) holoenzyme is proposed to be a heterotrimeric complex formed by the catalytic subunit, a SAPS domain-containing subunit (PP6R) and an ankyrin repeat-domain containing regulatory subunit (ARS).

Regulatory subunit of protein phosphatase 6 (PP6). May function as a scaffolding PP6 subunit. The protein is Serine/threonine-protein phosphatase 6 regulatory subunit 3 (PPP6R3) of Gallus gallus (Chicken).